Consider the following 675-residue polypeptide: MSSCFKSSVSLFSVFLFMILKTVTSDPTYLYHICPNTTTYSRNSSYLTNLRTVLSSLSSPNAAYASLFDNAAAGEENDSNRVYGVFLCRGDVSAEICRDCVAFAANETLQRCPREKVAVIWYDECMVRYSNQSIVGQMRIRPGVFLTNKQNITENQVSRFNESLPALLIDVAVKAALSSRKFATEKANFTVFQTIYSLVQCTPDLTNQDCESCLRQVINYLPRCCDRSVGGRVIAPSCSFRYELYPFYNETIAAAPMAPPPSSTVTAPPLNIPSEKGKGKNLTVIVTAIAVPVSVCVLLLGAMCWLLARRRNNKLSAETEDLDEDGITSTETLQFQFSAIEAATNKFSESNKLGHGGFGEVYKGQLITGETVAIKRLSQGSTQGAEEFKNEVDVVAKLQHRNLAKLLGYCLDGEEKILVYEFVPNKSLDYFLFDNEKRRVLDWQRRYKIIEGIARGILYLHRDSRLTIIHRDLKASNILLDADMHPKISDFGMARIFGVDQTQANTKRIVGTYGYMSPEYAIHGKYSVKSDVYSFGVLVLELITGKKNSSFYEEDGLGDLVTYVWKLWVENSPLELVDEAMRGNFQTNEVIRCIHIALLCVQEDSSERPSMDDILVMMNSFTVTLPIPKRSGFLLRTMKDSRDPRSGGSASDHSATSKSLPLSVDDSSITIVYPR.

The first 25 residues, 1–25 (MSSCFKSSVSLFSVFLFMILKTVTS), serve as a signal peptide directing secretion. At 26–281 (DPTYLYHICP…IPSEKGKGKN (256 aa)) the chain is on the extracellular side. Gnk2-homologous domains follow at residues 28 to 134 (TYLY…NQSI) and 140 to 247 (IRPG…LYPF). Residues Asn-36, Asn-43, Asn-77, Asn-106, Asn-131, Asn-151, Asn-161, Asn-188, Asn-249, and Asn-281 are each glycosylated (N-linked (GlcNAc...) asparagine). Residues 282–302 (LTVIVTAIAVPVSVCVLLLGA) traverse the membrane as a helical segment. At 303 to 675 (MCWLLARRRN…DSSITIVYPR (373 aa)) the chain is on the cytoplasmic side. One can recognise a Protein kinase domain in the interval 347–622 (FSESNKLGHG…DILVMMNSFT (276 aa)). ATP-binding positions include 353 to 361 (LGHGGFGEV) and Lys-375. Tyr-420 is modified (phosphotyrosine). The active-site Proton acceptor is Asp-472. Ser-476 carries the phosphoserine modification. Position 512 is a phosphothreonine (Thr-512). Tyr-520 is modified (phosphotyrosine). The interval 638–661 (MKDSRDPRSGGSASDHSATSKSLP) is disordered. A compositionally biased stretch (polar residues) spans 648-661 (GSASDHSATSKSLP).

Belongs to the protein kinase superfamily. Ser/Thr protein kinase family. CRK subfamily.

The protein resides in the membrane. It carries out the reaction L-seryl-[protein] + ATP = O-phospho-L-seryl-[protein] + ADP + H(+). The catalysed reaction is L-threonyl-[protein] + ATP = O-phospho-L-threonyl-[protein] + ADP + H(+). This is Cysteine-rich receptor-like protein kinase 25 (CRK25) from Arabidopsis thaliana (Mouse-ear cress).